The chain runs to 398 residues: CCA-adding enzyme (398 aa).

ATP contacts are provided by Gly-32 and Arg-35. Residues Gly-32 and Arg-35 each contribute to the CTP site. Mg(2+) is bound by residues Asp-45 and Asp-47. ATP contacts are provided by Arg-119, Asp-162, Arg-165, Arg-168, and Arg-171. CTP contacts are provided by Arg-119, Asp-162, Arg-165, Arg-168, and Arg-171.

This sequence belongs to the tRNA nucleotidyltransferase/poly(A) polymerase family. Bacterial CCA-adding enzyme type 3 subfamily. As to quaternary structure, homodimer. The cofactor is Mg(2+).

It catalyses the reaction a tRNA precursor + 2 CTP + ATP = a tRNA with a 3' CCA end + 3 diphosphate. The enzyme catalyses a tRNA with a 3' CCA end + 2 CTP + ATP = a tRNA with a 3' CCACCA end + 3 diphosphate. Functionally, catalyzes the addition and repair of the essential 3'-terminal CCA sequence in tRNAs without using a nucleic acid template. Adds these three nucleotides in the order of C, C, and A to the tRNA nucleotide-73, using CTP and ATP as substrates and producing inorganic pyrophosphate. tRNA 3'-terminal CCA addition is required both for tRNA processing and repair. Also involved in tRNA surveillance by mediating tandem CCA addition to generate a CCACCA at the 3' terminus of unstable tRNAs. While stable tRNAs receive only 3'-terminal CCA, unstable tRNAs are marked with CCACCA and rapidly degraded. The polypeptide is CCA-adding enzyme (Lactococcus lactis subsp. lactis (strain IL1403) (Streptococcus lactis)).